A 209-amino-acid chain; its full sequence is MGKHRRNNSNATRKAVAASAVALGATAAIASPAQAAEVVVPGTGISVDIAGIETTPGLNNVPGIDQWIPSLSSQAAPTAYAAVIDAPAAQAAPAASTGQAIVDAARTKIGSPYGWGATGPNAFDCSGLTSWAYSQVGKSIPRTSQAQAAQGTPVAYSDLQAGDIVAFYSGATHVGIYSGHGTVIHALNSSTPLSEHSLDYMPFHSAVRF.

Residues 1–35 form the signal peptide; sequence MGKHRRNNSNATRKAVAASAVALGATAAIASPAQA. Positions 95-209 constitute a NlpC/P60 domain; it reads ASTGQAIVDA…YMPFHSAVRF (115 aa). The Nucleophile role is filled by Cys-125. The active-site Proton acceptor is His-173. The active site involves His-185.

The protein belongs to the peptidase C40 family.

The protein resides in the secreted. The sequence is that of Probable endopeptidase Cgl2188 from Corynebacterium glutamicum (strain ATCC 13032 / DSM 20300 / JCM 1318 / BCRC 11384 / CCUG 27702 / LMG 3730 / NBRC 12168 / NCIMB 10025 / NRRL B-2784 / 534).